The sequence spans 193 residues: ATP-dependent Clp protease proteolytic subunit (193 aa).

Residue S98 is the Nucleophile of the active site. H123 is an active-site residue.

Belongs to the peptidase S14 family. As to quaternary structure, fourteen ClpP subunits assemble into 2 heptameric rings which stack back to back to give a disk-like structure with a central cavity, resembling the structure of eukaryotic proteasomes.

The protein resides in the cytoplasm. The enzyme catalyses Hydrolysis of proteins to small peptides in the presence of ATP and magnesium. alpha-casein is the usual test substrate. In the absence of ATP, only oligopeptides shorter than five residues are hydrolyzed (such as succinyl-Leu-Tyr-|-NHMec, and Leu-Tyr-Leu-|-Tyr-Trp, in which cleavage of the -Tyr-|-Leu- and -Tyr-|-Trp bonds also occurs).. Functionally, cleaves peptides in various proteins in a process that requires ATP hydrolysis. Has a chymotrypsin-like activity. Plays a major role in the degradation of misfolded proteins. The sequence is that of ATP-dependent Clp protease proteolytic subunit from Haemophilus influenzae (strain 86-028NP).